The sequence spans 471 residues: 6-phosphogluconate dehydrogenase, decarboxylating (471 aa).

NADP(+) contacts are provided by residues 10-15 (GLAVMG), 33-35 (NRT), 75-77 (VKA), and N103. Substrate is bound by residues N103 and 129-131 (SGG). Catalysis depends on K183, which acts as the Proton acceptor. 186-187 (HN) contacts substrate. Catalysis depends on E190, which acts as the Proton donor. Substrate contacts are provided by Y191, K263, R290, R449, and H455.

This sequence belongs to the 6-phosphogluconate dehydrogenase family. Homodimer.

It carries out the reaction 6-phospho-D-gluconate + NADP(+) = D-ribulose 5-phosphate + CO2 + NADPH. It functions in the pathway carbohydrate degradation; pentose phosphate pathway; D-ribulose 5-phosphate from D-glucose 6-phosphate (oxidative stage): step 3/3. Functionally, catalyzes the oxidative decarboxylation of 6-phosphogluconate to ribulose 5-phosphate and CO(2), with concomitant reduction of NADP to NADPH. The polypeptide is 6-phosphogluconate dehydrogenase, decarboxylating (gnd) (Synechococcus elongatus (strain ATCC 33912 / PCC 7942 / FACHB-805) (Anacystis nidulans R2)).